A 193-amino-acid polypeptide reads, in one-letter code: Xanthine phosphoribosyltransferase (193 aa).

Leu20 and Asn27 together coordinate xanthine. Residue 128-132 participates in 5-phospho-alpha-D-ribose 1-diphosphate binding; it reads ASGGT. Lys156 is a binding site for xanthine.

Belongs to the purine/pyrimidine phosphoribosyltransferase family. Xpt subfamily. As to quaternary structure, homodimer.

It localises to the cytoplasm. It carries out the reaction XMP + diphosphate = xanthine + 5-phospho-alpha-D-ribose 1-diphosphate. It participates in purine metabolism; XMP biosynthesis via salvage pathway; XMP from xanthine: step 1/1. Its function is as follows. Converts the preformed base xanthine, a product of nucleic acid breakdown, to xanthosine 5'-monophosphate (XMP), so it can be reused for RNA or DNA synthesis. The protein is Xanthine phosphoribosyltransferase of Deinococcus deserti (strain DSM 17065 / CIP 109153 / LMG 22923 / VCD115).